The sequence spans 420 residues: Glutamate dehydrogenase (420 aa).

Residue Lys105 is part of the active site. 220-226 lines the NAD(+) pocket; it reads GYGNAGY.

Belongs to the Glu/Leu/Phe/Val dehydrogenases family. Homohexamer.

It localises to the cytoplasm. The enzyme catalyses L-glutamate + NAD(+) + H2O = 2-oxoglutarate + NH4(+) + NADH + H(+). It carries out the reaction L-glutamate + NADP(+) + H2O = 2-oxoglutarate + NH4(+) + NADPH + H(+). This Pyrococcus abyssi (strain GE5 / Orsay) protein is Glutamate dehydrogenase (gdhA).